We begin with the raw amino-acid sequence, 82 residues long: Diphthamide biosynthesis protein 3 (82 aa).

A DPH-type MB domain is found at 8 to 64 (IYDEVEIEDMTYDPALQTYSYPCPCGDKFEIALADLQDGQDIAVCPSCSLMVRVIFE). Residues C30, C32, C52, and C55 each coordinate Fe cation.

Belongs to the DPH3 family. As to quaternary structure, component of the 2-(3-amino-3-carboxypropyl)histidine synthase complex composed of dph-1, dph-2, dph-3 and a NADH-dependent reductase, predominantly cbr-1. Fe(2+) is required as a cofactor.

It localises to the cytoplasm. The protein resides in the nucleus. It catalyses the reaction [3Fe-4S](1+)-[protein] + Fe(2+)-[Dph3] = [3Fe-4S](0)-[protein] + Fe(3+)-[Dph3]. The enzyme catalyses 2 [3Fe-4S](0)-[protein] + 2 Fe(2+)-[Dph3] + NADH = 2 [4Fe-4S](1+)-[protein] + 2 [Dph3] + NAD(+) + H(+). The protein operates within protein modification; peptidyl-diphthamide biosynthesis. Functionally, required for the first step of diphthamide biosynthesis, a post-translational modification of histidine which occurs in elongation factor 2. Dph-1 and dph-2 transfer a 3-amino-3-carboxypropyl (ACP) group from S-adenosyl-L-methionine (SAM) to a histidine residue, the reaction is assisted by a reduction system comprising dph-3 and a NADH-dependent reductase, predominantly cbr-1. Acts as an electron donor to reduce the Fe-S cluster in dph1-dph2 keeping the [4Fe-4S] clusters in the active and reduced state. Restores iron to dph-1-dph-2 iron-sulfur clusters which have degraded from [4Fe-4S] to [3Fe-4S] by donating an iron atom to reform [4Fe-4S] clusters, in a manner dependent on the presence of elongation factor 2 and SAM. Associates with the elongator complex and is required for tRNA Wobble base modifications mediated by the elongator complex. The elongator complex is required for multiple tRNA modifications, including mcm5U (5-methoxycarbonylmethyl uridine), mcm5s 2U (5-methoxycarbonylmethyl-2-thiouridine), and ncm5U (5-carbamoylmethyl uridine). This chain is Diphthamide biosynthesis protein 3 (dph-3), found in Neurospora crassa (strain ATCC 24698 / 74-OR23-1A / CBS 708.71 / DSM 1257 / FGSC 987).